The primary structure comprises 50 residues: Insulin (50 aa).

3 disulfides stabilise this stretch: cysteine 7-cysteine 36, cysteine 19-cysteine 49, and cysteine 35-cysteine 40.

The protein belongs to the insulin family. As to quaternary structure, heterodimer of a B chain and an A chain linked by two disulfide bonds.

The protein localises to the secreted. Functionally, insulin decreases blood glucose concentration. It increases cell permeability to monosaccharides, amino acids and fatty acids. It accelerates glycolysis, the pentose phosphate cycle, and glycogen synthesis in liver. The polypeptide is Insulin (INS) (Proechimys guairae (Guaira spiny rat)).